A 71-amino-acid chain; its full sequence is Dermaseptin-PT9 (71 aa).

The signal sequence occupies residues 1-22 (MAFLKKSLFLVLFLGLVSLSIC). Positions 23–43 (EEEKRENEMEQEDDEQSEMKR) are excised as a propeptide. Residue V68 is modified to Valine amide. Positions 69–71 (GEQ) are excised as a propeptide.

Belongs to the frog skin active peptide (FSAP) family. Dermaseptin subfamily. In terms of tissue distribution, expressed by the skin glands.

The protein localises to the secreted. Its subcellular location is the target cell membrane. Its function is as follows. Antimicrobial peptide with activity against fungi, Gram-positive and Gram-negative bacteria. Is active against S.aureus (MIC=16 uM), MRSA (MIC=32 uM), E.faecalis (MIC=16 uM), E.coli (MIC=8 uM), P.aeruginosa (MIC=16 uM), K.pneumoniae (MIC=8 uM), and C.albicans (MIC=64 uM). Also inhibits biofilm formation. Acts by disrupting cell membranes. Also exhibits anti-proliferative effect against various human cancer cells. Shows weak hemolytic activity towards horse erythrocytes. The polypeptide is Dermaseptin-PT9 (Phyllomedusa tarsius (Brownbelly leaf frog)).